The primary structure comprises 32 residues: Kappa-conotoxin SrXIA (32 aa).

Intrachain disulfides connect Cys-1-Cys-15, Cys-8-Cys-20, Cys-14-Cys-24, and Cys-19-Cys-28. A 4-carboxyglutamate mark is found at Glu-9 and Glu-10. Proline amide is present on Pro-32.

This sequence belongs to the conotoxin I2 superfamily. Expressed by the venom duct.

The protein localises to the secreted. Its function is as follows. Kappa-conotoxins bind and inhibit voltage-gated potassium channels. This toxin inhibits Kv1.2/KCNA2 and Kv1.6/KCNA6. Produces stiffening of body, limbs and tail when injected intracranially into mice. The protein is Kappa-conotoxin SrXIA of Conus spurius (Alphabet cone).